Reading from the N-terminus, the 40-residue chain is Large ribosomal subunit protein bL36 (40 aa).

This sequence belongs to the bacterial ribosomal protein bL36 family.

This chain is Large ribosomal subunit protein bL36, found in Corynebacterium jeikeium (strain K411).